Consider the following 1723-residue polypeptide: Lys-gingipain (1723 aa).

Residues 1–24 form the signal peptide; sequence MRKLLLLIAASLLGVGLYAQSAKI. The propeptide occupies 25-228; the sequence is KLDAPTTRTT…ETAYKQLFNR (204 aa). Aspartate 313, aspartate 337, aspartate 339, phenylalanine 341, and glutamate 343 together coordinate Ca(2+). Catalysis depends on histidine 444, which acts as the Proton donor. The active-site Nucleophile is cysteine 477. Residues phenylalanine 482 and glutamate 491 each coordinate Ca(2+). Residues 964–985 are disordered; that stretch reads WDAPNGTPNPNPNPNPGTTTLS. Ca(2+) contacts are provided by serine 987, glutamate 989, aspartate 1000, aspartate 1002, aspartate 1004, histidine 1006, serine 1021, glycine 1023, asparagine 1042, aspartate 1145, glutamate 1146, aspartate 1430, glutamate 1432, aspartate 1444, aspartate 1446, aspartate 1448, asparagine 1450, serine 1480, asparagine 1495, and aspartate 1585.

The protein belongs to the peptidase C25 family. Proteolytically cleaved into a catalytic subunit and three adhesins. Arg-gingipain is involved in this post-translational processing.

The protein resides in the secreted. It catalyses the reaction Endopeptidase with strict specificity for lysyl bonds.. Activated by the thiol-reducing agents cysteine, 2-mercaptoethanol and dithiothreitol. Inhibited by iodacetamide, iodoacetic acid, leupeptin, tosyl-L-lysine and tosyl-L-phenylalanine. Not inhibited by elastatinal, chymostatin, cystatins, alpha1-antichymotrypsin or the serine protease inhibitors phenylmethylsulfonyl fluoride and diisopropylfluorophosphate. Not inhibited by metal ion chelators. Inhibited by the heavy metal ions Fe(3+), Zn(2+), Cu(2+) and Mn(2+). Functionally, cysteine proteinase with a strong preference for substrates with Lys in the P1 position. Hydrolyzes bovine hemoglobin, bovine serum albumin, casein, human placental type I collagen and human IgA and IgG. Disrupts the functions of polymorphonuclear leukocytes. May act as a virulence factor in the development of peridontal disease. Involved in the coaggregation of P.gingivalis with other oral bacteria. This chain is Lys-gingipain, found in Porphyromonas gingivalis (strain ATCC 33277 / DSM 20709 / CIP 103683 / JCM 12257 / NCTC 11834 / 2561).